The following is a 554-amino-acid chain: Acetyl-S-ACP:malonate ACP transferase (554 aa).

The protein localises to the cytoplasm. It carries out the reaction acetyl-[ACP] + malonate = malonyl-[ACP] + acetate. Functionally, alpha subunit of the biotin-independent and biotin-dependent malonate decarboxylase multienzyme complex (EC 4.1.1.88 and EC 7.2.4.4, respectively). Acts as an acyl-carrier protein (ACP) transferase component. This first step in malonate decarboxylation involves the exchange of an acetyl thioester residue bound to the activated ACP subunit for a malonyl thioester residue. Has a weak activity with acetyl-CoA as substrate. This is Acetyl-S-ACP:malonate ACP transferase (madA) from Malonomonas rubra.